The chain runs to 492 residues: Solute carrier family 2, facilitated glucose transporter member 1 (492 aa).

At Met1 the chain carries N-acetylmethionine. Residues 1–11 (MEPSSKKLTGR) lie on the Cytoplasmic side of the membrane. Residues 12 to 33 (LMLAVGGAVLGSLQFGYNTGVI) traverse the membrane as a helical segment. The Extracellular portion of the chain corresponds to 34-66 (NAPQKVIEEFYNQTWLHRYGESISPATLTTLWS). N-linked (GlcNAc...) asparagine glycosylation is present at Asn45. The helical transmembrane segment at 67-87 (LSVAIFSVGGMIGSFSVGLFV) threads the bilayer. Residues 88 to 90 (NRF) lie on the Cytoplasmic side of the membrane. A helical membrane pass occupies residues 91–112 (GRRNSMLMMNLLAFISAVLMGF). The Extracellular segment spans residues 113-120 (SKLGKSFE). Residues 121 to 144 (MLILGRFIIGVYCGLTTGFVPMYV) traverse the membrane as a helical segment. Topologically, residues 145-155 (GEVSPTALRGA) are cytoplasmic. The chain crosses the membrane as a helical span at residues 156–176 (LGTLHQLGIVVGILIAQVFGL). Position 161 (Gln161) interacts with D-glucose. At 177–185 (DSIMGNEEL) the chain is on the extracellular side. The chain crosses the membrane as a helical span at residues 186–206 (WPLLLSVIFIPALLQCVLLPF). Topologically, residues 207–271 (CPESPRFLLI…LFRSAAYRQP (65 aa)) are cytoplasmic. Residue Ser226 is modified to Phosphoserine. Residues 272–293 (ILIAVVLQLSQQLSGINAVFYY) form a helical membrane-spanning segment. Residues 282-283 (QQ) and Asn288 each bind D-glucose. The Extracellular segment spans residues 294–306 (STSIFEKAGVQQP). Residues 307 to 328 (VYATIGSGIVNTAFTVVSLFVV) form a helical membrane-spanning segment. Residue Asn317 coordinates D-glucose. The Cytoplasmic portion of the chain corresponds to 329 to 334 (ERAGRR). A helical transmembrane segment spans residues 335–355 (TLHLIGLAGMAGCAVLMTIAL). Topologically, residues 356 to 365 (ALLEQLPWMS) are extracellular. A helical membrane pass occupies residues 366–388 (YLSIVAIFGFVAFFEVGPGPIPW). Residues Glu380 and Trp388 each contribute to the D-glucose site. The Cytoplasmic portion of the chain corresponds to 389-401 (FIVAELFSQGPRP). The helical transmembrane segment at 402-422 (AAIAVAGFSNWTSNFIVGMCF) threads the bilayer. Residues 423–429 (QYVEQLC) lie on the Extracellular side of the membrane. The helical transmembrane segment at 430-450 (GPYVFIIFTVLLVLFFIFTYF) threads the bilayer. Ser465 carries the phosphoserine modification. The disordered stretch occupies residues 468-492 (RQGGASQSDKTPEELFHPLGADSQV). Thr478 is subject to Phosphothreonine. A Phosphoserine modification is found at Ser490.

This sequence belongs to the major facilitator superfamily. Sugar transporter (TC 2.A.1.1) family. Glucose transporter subfamily. As to quaternary structure, found in a complex with ADD2, DMTN and SLC2A1. Interacts (via C-terminus cytoplasmic region) with DMTN. Interacts with SNX27; the interaction is required when endocytosed to prevent degradation in lysosomes and promote recycling to the plasma membrane. Interacts with GIPC (via PDZ domain). Interacts with STOM. Interacts with SGTA (via Gln-rich region). Interacts with BSG. Interacts with SMIM43; the interaction may promote SLC2A1-mediated glucose transport to meet the energy needs of mesendoderm differentiation. Phosphorylation at Ser-226 by PKC promotes glucose uptake by increasing cell membrane localization.

The protein localises to the cell membrane. Its subcellular location is the photoreceptor inner segment. It catalyses the reaction D-glucose(out) = D-glucose(in). Its activity is regulated as follows. The uptake of glucose is inhibited by cytochalasin B. Glucose uptake is increased in response to phorbol ester 12-O-tetradecanoylphorbol-13-acetate (TPA) treatment: TPA-induced glucose uptake requires phosphorylation at Ser-226. Facilitative glucose transporter, which is responsible for constitutive or basal glucose uptake. Has a very broad substrate specificity; can transport a wide range of aldoses including both pentoses and hexoses. Most important energy carrier of the brain: present at the blood-brain barrier and assures the energy-independent, facilitative transport of glucose into the brain. In association with BSG and NXNL1, promotes retinal cone survival by increasing glucose uptake into photoreceptors. Required for mesendoderm differentiation. This Sus scrofa (Pig) protein is Solute carrier family 2, facilitated glucose transporter member 1.